The following is a 602-amino-acid chain: Elongation factor 4 (602 aa).

A tr-type G domain is found at 7–189 (SKIRNFCIIA…AIVRRVPPPQ (183 aa)). Residues 19 to 24 (DHGKST) and 136 to 139 (NKVD) each bind GTP.

This sequence belongs to the TRAFAC class translation factor GTPase superfamily. Classic translation factor GTPase family. LepA subfamily.

Its subcellular location is the cell inner membrane. The enzyme catalyses GTP + H2O = GDP + phosphate + H(+). Its function is as follows. Required for accurate and efficient protein synthesis under certain stress conditions. May act as a fidelity factor of the translation reaction, by catalyzing a one-codon backward translocation of tRNAs on improperly translocated ribosomes. Back-translocation proceeds from a post-translocation (POST) complex to a pre-translocation (PRE) complex, thus giving elongation factor G a second chance to translocate the tRNAs correctly. Binds to ribosomes in a GTP-dependent manner. The sequence is that of Elongation factor 4 from Prochlorococcus marinus (strain MIT 9215).